Reading from the N-terminus, the 151-residue chain is Arginine repressor (151 aa).

The protein belongs to the ArgR family.

It is found in the cytoplasm. It functions in the pathway amino-acid biosynthesis; L-arginine biosynthesis [regulation]. Functionally, regulates arginine biosynthesis genes. This is Arginine repressor from Enterococcus faecalis (strain ATCC 700802 / V583).